A 221-amino-acid polypeptide reads, in one-letter code: ATP phosphoribosyltransferase (221 aa).

This sequence belongs to the ATP phosphoribosyltransferase family. Short subfamily. As to quaternary structure, heteromultimer composed of HisG and HisZ subunits.

It is found in the cytoplasm. It catalyses the reaction 1-(5-phospho-beta-D-ribosyl)-ATP + diphosphate = 5-phospho-alpha-D-ribose 1-diphosphate + ATP. It participates in amino-acid biosynthesis; L-histidine biosynthesis; L-histidine from 5-phospho-alpha-D-ribose 1-diphosphate: step 1/9. In terms of biological role, catalyzes the condensation of ATP and 5-phosphoribose 1-diphosphate to form N'-(5'-phosphoribosyl)-ATP (PR-ATP). Has a crucial role in the pathway because the rate of histidine biosynthesis seems to be controlled primarily by regulation of HisG enzymatic activity. This chain is ATP phosphoribosyltransferase, found in Anaeromyxobacter dehalogenans (strain 2CP-1 / ATCC BAA-258).